The chain runs to 84 residues: Small ribosomal subunit protein uS17c (84 aa).

The protein belongs to the universal ribosomal protein uS17 family. In terms of assembly, part of the 30S ribosomal subunit.

It localises to the plastid. The protein resides in the chloroplast. Its function is as follows. One of the primary rRNA binding proteins, it binds specifically to the 5'-end of 16S ribosomal RNA. This is Small ribosomal subunit protein uS17c (rps17) from Thalassiosira pseudonana (Marine diatom).